We begin with the raw amino-acid sequence, 112 residues long: UPF0342 protein STH1710 (112 aa).

Belongs to the UPF0342 family.

The polypeptide is UPF0342 protein STH1710 (Symbiobacterium thermophilum (strain DSM 24528 / JCM 14929 / IAM 14863 / T)).